Here is a 486-residue protein sequence, read N- to C-terminus: Vesicular GABA transporter (486 aa).

Residues 1 to 93 (MASNRFQNLQ…EASEPISALQ (93 aa)) are Cytoplasmic-facing. The span at 29 to 46 (LNEVPSYQNQPQTGESGS) shows a compositional bias: polar residues. The tract at residues 29–85 (LNEVPSYQNQPQTGESGSNPPPHDRLEPIQESVVSEQPQKDDINKQEEAKDDGHGEA) is disordered. The span at 66–85 (PQKDDINKQEEAKDDGHGEA) shows a compositional bias: basic and acidic residues. The helical transmembrane segment at 94 to 114 (AAWNVTNAIQGMFIVGLPIAV) threads the bilayer. Topologically, residues 115-119 (KVGGW) are lumenal, vesicle. Residues 120 to 140 (WSIGAMVGVAYVCYWTGVLLI) form a helical membrane-spanning segment. The Cytoplasmic segment spans residues 141 to 167 (ECLYENGVKKRKTYREIADFYKPGFGK). Residues 168–188 (WVLAAQLTELLSTCIIYLVLA) traverse the membrane as a helical segment. Topologically, residues 189 to 203 (ADLLQSCFPSVDKAG) are lumenal, vesicle. A helical transmembrane segment spans residues 204 to 224 (WMMITSASLLTCSFLDDLQIV). Residues 225–228 (SRLS) are Cytoplasmic-facing. The helical transmembrane segment at 229–249 (FFNAISHLIVNLIMVLYCLSF) threads the bilayer. The Lumenal, vesicle portion of the chain corresponds to 250–263 (VSQWSFSTITFSLN). A helical membrane pass occupies residues 264–284 (INTLPTIVGMVVFGYTSHIFL). At 285–305 (PNLEGNMKNPAQFNVMLKWSH) the chain is on the cytoplasmic side. A helical membrane pass occupies residues 306–326 (IAAAVFKVVFGMLGFLTFGEL). Residues 327–341 (TQEEISNSLPNQSFK) are Lumenal, vesicle-facing. A glycan (N-linked (GlcNAc...) asparagine) is linked at N337. A helical transmembrane segment spans residues 342–362 (ILVNLILVVKALLSYPLPFYA). Over 363–398 (AVQLLKNNLFLGYPQTPFTSCYSPDKSLREWAVTLR) the chain is Cytoplasmic. The chain crosses the membrane as a helical span at residues 399–419 (IILVLFTLFVALSVPYLVELM). The Lumenal, vesicle portion of the chain corresponds to 420–421 (GL). The helical transmembrane segment at 422 to 442 (VGNITGTMLSFIWPALFHLYI) threads the bilayer. Topologically, residues 443 to 457 (KEKTLNNFEKRFDQG) are cytoplasmic. A helical transmembrane segment spans residues 458 to 478 (IIIMGCSVCISGVYFSSMELL). The Lumenal, vesicle segment spans residues 479 to 486 (RAINSADS).

It belongs to the amino acid/polyamine transporter 2 family.

The protein resides in the cytoplasmic vesicle membrane. Its function is as follows. Involved in the uptake of GABA into the synaptic vesicles. The sequence is that of Vesicular GABA transporter (unc-47) from Caenorhabditis elegans.